Reading from the N-terminus, the 427-residue chain is Imidazolonepropionase (427 aa).

The Fe(3+) site is built by histidine 78 and histidine 80. Residues histidine 78 and histidine 80 each contribute to the Zn(2+) site. 4-imidazolone-5-propanoate contacts are provided by arginine 87, tyrosine 150, and histidine 183. Tyrosine 150 is a binding site for N-formimidoyl-L-glutamate. Fe(3+) is bound at residue histidine 255. Histidine 255 is a Zn(2+) binding site. Glutamate 258 contacts 4-imidazolone-5-propanoate. Residue aspartate 330 coordinates Fe(3+). Zn(2+) is bound at residue aspartate 330. Asparagine 332 and glycine 334 together coordinate N-formimidoyl-L-glutamate. Threonine 335 contacts 4-imidazolone-5-propanoate.

It belongs to the metallo-dependent hydrolases superfamily. HutI family. Zn(2+) serves as cofactor. Requires Fe(3+) as cofactor.

Its subcellular location is the cytoplasm. The catalysed reaction is 4-imidazolone-5-propanoate + H2O = N-formimidoyl-L-glutamate. Its pathway is amino-acid degradation; L-histidine degradation into L-glutamate; N-formimidoyl-L-glutamate from L-histidine: step 3/3. Its function is as follows. Catalyzes the hydrolytic cleavage of the carbon-nitrogen bond in imidazolone-5-propanoate to yield N-formimidoyl-L-glutamate. It is the third step in the universal histidine degradation pathway. In Herpetosiphon aurantiacus (strain ATCC 23779 / DSM 785 / 114-95), this protein is Imidazolonepropionase.